Reading from the N-terminus, the 399-residue chain is Protein phosphatase 2C 37 (399 aa).

Residues 104–389 form the PPM-type phosphatase domain; the sequence is KIGTTSVCGR…DNVSVVVVDL (286 aa). Mn(2+) is bound by residues D142 and G143. Zn(2+)-binding residues include C146, H148, C208, and C210. Residues D327, D331, and D380 each coordinate Mn(2+).

The protein belongs to the PP2C family. Interacts with AKT2/AKT3. Interacts with ABA-bounded PYR1, PYL1, PYL2, PYL3, PYL4, PYL9 and PYL12, and with free PYL2, PYL3, PYL4 and PYL13. Binds to and inactivates SLAC1 and SRK2E. The inactivation of SRK2E does not require phosphatase activity. Interacts with CBL1, CBL2, CBL3, CBL5, and CBL7, but not CBL4, CBL6, and CBL9. Interacts with RGLG1 and RGLG5. Interacts with KIN10. It depends on Mg(2+) as a cofactor. Mn(2+) is required as a cofactor. Post-translationally, ubiquitinated by RGLG1 and RGLG5 in response to abscisic acid (ABA). Ubiquitination of PP2CA leads to its degradation by the proteasome. As to expression, mostly expressed in seeds and leaves, and, to a lower extent, in roots, stems, and flowers, particularly in siliques. Essentially found in the phloem.

The catalysed reaction is O-phospho-L-seryl-[protein] + H2O = L-seryl-[protein] + phosphate. It carries out the reaction O-phospho-L-threonyl-[protein] + H2O = L-threonyl-[protein] + phosphate. Its activity is regulated as follows. Repressed by PYR/PYL/RCAR ABA receptors in an ABA-dependent manner. Its function is as follows. Major negative regulator of abscisic acid (ABA) responses during seed germination and cold acclimation. Confers insensitivity to ABA. Modulates negatively the AKT2/3 activity, which mediates K(+) transport and membrane polarization during stress situations, probably by dephosphorylation. Prevents stomata closure by inactivating the S-type anion efflux channel SLAC1 and its activator SRK2E. Represses KIN10 activity by the specific dephosphorylation of its T-loop Thr-198, leading to a poststress inactivation of SnRK1 signaling. The protein is Protein phosphatase 2C 37 (PP2CA) of Arabidopsis thaliana (Mouse-ear cress).